We begin with the raw amino-acid sequence, 673 residues long: MTNKPTVVTCGLPYTNGFCHLGHLRTYIPGDFYVRYLRRLGDDIVFICGSDNHGTPIVVTAEAEKTTPRAVSETYHAHFDNVFKSMGIAFDRFGMTDDPTNHHRTVSILQTLIDRGYVYEQTIQQSYCPKCKRFLPDRYVEGTCPYCGKHARGDECDSGCGRHLEPGEILDPVCATCGTKAELREQKHYYFKLSSFRDYLLEYLPTLGGTLNAKNYAIGWVENELKDWCITRMMDWGVKFPGSDDLVCYVWVDAPIGYISFTEEWAKATNNSWQKYWCEGDRVHFIGSDIIYHHCVFWPAMLHGAGYQPPTAVVASGMVTIDGEKFSKSKGNVVWTKEDYLDKGLPADYLRYYLLAYTSHTRELDFSWKEFQARINNELVNTFGNFANRSMSLVKTKFGDVPQVPVEAEIFAEIERSLAAIEESVRAYEFKAAVDGILLLAAYGNSYISNAAPWKLIKEDPQAAAQILKNCLQIVKACALIMQPVMPESSQKLWEMLGYTDKIESRPISDALVPFENTTLGDVKPLFARIEDKQREEMEAVLTKRAEDSKKKAAGKNTMEAVIEPISEEIITIDDVAKLDLRVGRVVKAERVPKTTKLLRLQVDIGTEVRQIVSGIADVYTPEEMVDKKIIVVVNLKPAKFRGEESNGMLFAAGEEASLLVPLKDVPEGTKVH.

The 'HIGH' region motif lies at 13 to 23; sequence PYTNGFCHLGH. Positions 144, 147, 156, and 160 each coordinate Zn(2+). The short motif at 325–329 is the 'KMSKS' region element; the sequence is KFSKS. Lys328 is an ATP binding site. Positions 575–673 constitute a tRNA-binding domain; the sequence is DVAKLDLRVG…KDVPEGTKVH (99 aa).

Belongs to the class-I aminoacyl-tRNA synthetase family. MetG type 1 subfamily. As to quaternary structure, homodimer. Requires Zn(2+) as cofactor.

The protein localises to the cytoplasm. It carries out the reaction tRNA(Met) + L-methionine + ATP = L-methionyl-tRNA(Met) + AMP + diphosphate. Functionally, is required not only for elongation of protein synthesis but also for the initiation of all mRNA translation through initiator tRNA(fMet) aminoacylation. In Methanocorpusculum labreanum (strain ATCC 43576 / DSM 4855 / Z), this protein is Methionine--tRNA ligase.